The chain runs to 324 residues: NADH-ubiquinone oxidoreductase chain 1 (324 aa).

A run of 8 helical transmembrane segments spans residues 9–29 (VLNP…LTLL), 75–95 (FLFL…WAPM), 106–126 (LGVL…LGSG), 146–166 (ISYE…TGGF), 177–197 (SIWL…STLA), 237–257 (ILLM…IPAL), 259–279 (ELTA…FLWV), and 299–319 (FLPM…ALAG).

This sequence belongs to the complex I subunit 1 family.

It localises to the mitochondrion inner membrane. The catalysed reaction is a ubiquinone + NADH + 5 H(+)(in) = a ubiquinol + NAD(+) + 4 H(+)(out). In terms of biological role, core subunit of the mitochondrial membrane respiratory chain NADH dehydrogenase (Complex I) that is believed to belong to the minimal assembly required for catalysis. Complex I functions in the transfer of electrons from NADH to the respiratory chain. The immediate electron acceptor for the enzyme is believed to be ubiquinone. The polypeptide is NADH-ubiquinone oxidoreductase chain 1 (MT-ND1) (Thymallus arcticus (Arctic grayling)).